Here is a 164-residue protein sequence, read N- to C-terminus: UPF0304 protein Ent638_2838 (164 aa).

Belongs to the UPF0304 family.

This chain is UPF0304 protein Ent638_2838, found in Enterobacter sp. (strain 638).